Here is a 299-residue protein sequence, read N- to C-terminus: MAAITAGMVAELRGKTDAPMMECKKALTEADGDMAKAEEILRVKLGNKASKAAVRIAAEGIVAVSISADGKLGSIIEVNSETDFVAKNDEFIALSNGCAALVANQNPADVAALSALPMGEGTVESTRSALVGKIGENMTIRRFVRFEAKGKLVSYIHGGAKVGVVVDLVGGDEQLGKDLAMHIAASKPKSLDSTGVPAELLETERRVAIEKAREAGKPEAMLEKIAEGTVQKYLKDVTLLGQVFVKAADGKQTIEQLLKEKGASVAGFTLYMVGEGIEKKVDDFAAEVAAQAAAAAAKK.

Positions Thr82–Val85 are involved in Mg(2+) ion dislocation from EF-Tu.

The protein belongs to the EF-Ts family.

It localises to the cytoplasm. Associates with the EF-Tu.GDP complex and induces the exchange of GDP to GTP. It remains bound to the aminoacyl-tRNA.EF-Tu.GTP complex up to the GTP hydrolysis stage on the ribosome. This chain is Elongation factor Ts, found in Dechloromonas aromatica (strain RCB).